Here is a 273-residue protein sequence, read N- to C-terminus: Tryptophan synthase alpha chain (273 aa).

Residues Glu49 and Asp60 each act as proton acceptor in the active site.

Belongs to the TrpA family. As to quaternary structure, tetramer of two alpha and two beta chains.

The enzyme catalyses (1S,2R)-1-C-(indol-3-yl)glycerol 3-phosphate + L-serine = D-glyceraldehyde 3-phosphate + L-tryptophan + H2O. It participates in amino-acid biosynthesis; L-tryptophan biosynthesis; L-tryptophan from chorismate: step 5/5. The alpha subunit is responsible for the aldol cleavage of indoleglycerol phosphate to indole and glyceraldehyde 3-phosphate. In Thiobacillus denitrificans (strain ATCC 25259 / T1), this protein is Tryptophan synthase alpha chain.